The primary structure comprises 173 residues: Ribosome maturation factor RimM (173 aa).

A PRC barrel domain is found at 92–165 (EDEYYHTDLI…RVVVALPQEI (74 aa)).

Belongs to the RimM family. In terms of assembly, binds ribosomal protein uS19.

It is found in the cytoplasm. An accessory protein needed during the final step in the assembly of 30S ribosomal subunit, possibly for assembly of the head region. Essential for efficient processing of 16S rRNA. May be needed both before and after RbfA during the maturation of 16S rRNA. It has affinity for free ribosomal 30S subunits but not for 70S ribosomes. In Bradyrhizobium diazoefficiens (strain JCM 10833 / BCRC 13528 / IAM 13628 / NBRC 14792 / USDA 110), this protein is Ribosome maturation factor RimM.